The primary structure comprises 89 residues: MALTAEEKQEIIAKYATHEGDTGSPEVQVALLSKRIADLTEHLKEHKHDHHSRRGMQLMIGDRRRLLDYLKRVDINRYRSLIERLGLRR.

The protein belongs to the universal ribosomal protein uS15 family. Part of the 30S ribosomal subunit. Forms a bridge to the 50S subunit in the 70S ribosome, contacting the 23S rRNA.

Its function is as follows. One of the primary rRNA binding proteins, it binds directly to 16S rRNA where it helps nucleate assembly of the platform of the 30S subunit by binding and bridging several RNA helices of the 16S rRNA. Forms an intersubunit bridge (bridge B4) with the 23S rRNA of the 50S subunit in the ribosome. This chain is Small ribosomal subunit protein uS15, found in Bifidobacterium longum (strain DJO10A).